Reading from the N-terminus, the 496-residue chain is Probable cytosol aminopeptidase (496 aa).

Residues K266 and D271 each contribute to the Mn(2+) site. The active site involves K278. 3 residues coordinate Mn(2+): D289, D348, and E350. The active site involves R352.

The protein belongs to the peptidase M17 family. Mn(2+) is required as a cofactor.

The protein localises to the cytoplasm. The enzyme catalyses Release of an N-terminal amino acid, Xaa-|-Yaa-, in which Xaa is preferably Leu, but may be other amino acids including Pro although not Arg or Lys, and Yaa may be Pro. Amino acid amides and methyl esters are also readily hydrolyzed, but rates on arylamides are exceedingly low.. It carries out the reaction Release of an N-terminal amino acid, preferentially leucine, but not glutamic or aspartic acids.. Presumably involved in the processing and regular turnover of intracellular proteins. Catalyzes the removal of unsubstituted N-terminal amino acids from various peptides. The sequence is that of Probable cytosol aminopeptidase from Azotobacter vinelandii (strain DJ / ATCC BAA-1303).